We begin with the raw amino-acid sequence, 324 residues long: UDP-N-acetylenolpyruvoylglucosamine reductase (324 aa).

The region spanning 36–203 (FRAGGLAELM…THAIFEGFPE (168 aa)) is the FAD-binding PCMH-type domain. R183 is an active-site residue. S232 (proton donor) is an active-site residue. Residue E302 is part of the active site.

This sequence belongs to the MurB family. FAD is required as a cofactor.

Its subcellular location is the cytoplasm. It carries out the reaction UDP-N-acetyl-alpha-D-muramate + NADP(+) = UDP-N-acetyl-3-O-(1-carboxyvinyl)-alpha-D-glucosamine + NADPH + H(+). The protein operates within cell wall biogenesis; peptidoglycan biosynthesis. Its function is as follows. Cell wall formation. In Sinorhizobium fredii (strain NBRC 101917 / NGR234), this protein is UDP-N-acetylenolpyruvoylglucosamine reductase.